The sequence spans 760 residues: Transglutaminase-activating metalloprotease (760 aa).

The first 33 residues, 1–33, serve as a signal peptide directing secretion; sequence MRPTPQRRAVATGALVAVTAMLAVGVQTTSANA. Disordered regions lie at residues 32–59 and 228–265; these read NAGQDKAAHPAPRQSIHKPDPGAEPVKL and KQGTGNSQHSGQVQIGTTKSGSSYQMNDTTRGGHKTYN. Positions 34–229 are excised as a propeptide; the sequence is GQDKAAHPAP…KLFEFQGVKQ (196 aa). Residues 228–257 show a composition bias toward polar residues; it reads KQGTGNSQHSGQVQIGTTKSGSSYQMNDTT. His-366 provides a ligand contact to Zn(2+). Glu-367 is an active-site residue. 2 residues coordinate Zn(2+): His-370 and Glu-390. The active-site Proton donor is His-454. Positions 640 to 760 constitute a P/Homo B domain; that stretch reads TVNTTGGGSV…GTIDKWRLTF (121 aa).

This sequence belongs to the peptidase M4 family. The cofactor is Zn(2+).

Its subcellular location is the secreted. Functionally, cleaves the N-terminal propeptide of transglutaminase thus activating it. This chain is Transglutaminase-activating metalloprotease, found in Streptomyces mobaraensis (Streptoverticillium mobaraense).